Here is a 67-residue protein sequence, read N- to C-terminus: Large ribosomal subunit protein bL35 (67 aa).

It belongs to the bacterial ribosomal protein bL35 family.

This Rhizobium johnstonii (strain DSM 114642 / LMG 32736 / 3841) (Rhizobium leguminosarum bv. viciae) protein is Large ribosomal subunit protein bL35.